Here is a 130-residue protein sequence, read N- to C-terminus: Small ribosomal subunit protein uS11 (130 aa).

This sequence belongs to the universal ribosomal protein uS11 family. Part of the 30S ribosomal subunit. Interacts with proteins S7 and S18. Binds to IF-3.

Located on the platform of the 30S subunit, it bridges several disparate RNA helices of the 16S rRNA. Forms part of the Shine-Dalgarno cleft in the 70S ribosome. In Rippkaea orientalis (strain PCC 8801 / RF-1) (Cyanothece sp. (strain PCC 8801)), this protein is Small ribosomal subunit protein uS11.